The following is a 148-amino-acid chain: Small ribosomal subunit protein bS6 (148 aa).

Positions 97-148 (EEGPSAMLQRRDDRERGDRGDRGPRRDFDDRGPRRPREDDRPRRSREDEGDE) are disordered.

This sequence belongs to the bacterial ribosomal protein bS6 family.

Functionally, binds together with bS18 to 16S ribosomal RNA. This chain is Small ribosomal subunit protein bS6, found in Chelativorans sp. (strain BNC1).